Here is a 589-residue protein sequence, read N- to C-terminus: Transcription factor 4 (589 aa).

Disordered regions lie at residues 1 to 124 (MTSR…SSSK), 138 to 163 (DGHH…MLGN), 184 to 239 (PSHS…SQTG), 254 to 297 (HTNN…EGPL), 384 to 492 (SLLP…MANN), and 556 to 589 (KRRE…MGQM). Phosphoserine is present on residues Ser-8 and Ser-13. The segment covering 56-74 (GTLSPTKPGSQYYPYSSNN) has biased composition (polar residues). Residues 136–157 (MQDGHHSSDPWSSSSGMNQPGY) are leucine-zipper. Positions 184 to 224 (PSHSSADINSSLPPMSTFHRSGTNHYSTSSCTPPANGTDSI) are enriched in polar residues. Residues 255–266 (TNNSFSSNPSTP) show a composition bias toward low complexity. The segment covering 283-292 (NGGQASSSPN) has biased composition (polar residues). Ser-290 carries the post-translational modification Phosphoserine. The tract at residues 380 to 403 (RGSHSLLPNQVPVPQLPVQSATSP) is class A specific domain. Low complexity-rich tracts occupy residues 385 to 398 (LLPN…LPVQ) and 421 to 430 (GQSVSSGSSE). Ser-433 is subject to Phosphoserine. Basic and acidic residues-rich tracts occupy residues 445–461 (KSSE…DIKS) and 477–492 (PEQK…MANN). One can recognise a bHLH domain in the interval 486 to 539 (ERRMANNARERLRVRDINEAFKELGRMVQLHLKSDKPQTKLLILHQAVAVILSL).

Efficient DNA binding requires dimerization with another bHLH protein. Forms homo- or heterooligomers with myogenin. Interacts with HIVEP2. Interacts with NEUROD2. Interacts with AGBL1.

It is found in the nucleus. Its function is as follows. Transcription factor that binds to the immunoglobulin enhancer Mu-E5/KE5-motif. Involved in the initiation of neuronal differentiation. Activates transcription by binding to the E box (5'-CANNTG-3'). Binds to the E-box present in the somatostatin receptor 2 initiator element (SSTR2-INR) to activate transcription. Interacts with the CCAAT displacement protein (CDP2) to bind the tyrosine hydroxylase enhancer. This is Transcription factor 4 (Tcf4) from Rattus norvegicus (Rat).